Consider the following 142-residue polypeptide: Large ribosomal subunit protein uL11 (142 aa).

This sequence belongs to the universal ribosomal protein uL11 family. As to quaternary structure, part of the ribosomal stalk of the 50S ribosomal subunit. Interacts with L10 and the large rRNA to form the base of the stalk. L10 forms an elongated spine to which L12 dimers bind in a sequential fashion forming a multimeric L10(L12)X complex. Post-translationally, one or more lysine residues are methylated.

Functionally, forms part of the ribosomal stalk which helps the ribosome interact with GTP-bound translation factors. The sequence is that of Large ribosomal subunit protein uL11 from Mycolicibacterium gilvum (strain PYR-GCK) (Mycobacterium gilvum (strain PYR-GCK)).